Here is a 28-residue protein sequence, read N- to C-terminus: RCLHAGAACSGPIQKIPCCGTCSRRKCT.

Disulfide bonds link cysteine 2-cysteine 19, cysteine 9-cysteine 22, and cysteine 18-cysteine 27.

As to expression, expressed by the venom gland.

Its subcellular location is the secreted. Toxin that acts as an agonist on melanocortin receptors (MC1R, MC3R, MC5R, MC5R). After binding to MC1R, the peptide activates the hMC1R/Gs pathway, but after binding to MC4R, it is not able to activate or antagonize the MC4R/Gs pathway. Inhibits melanocyte stimulating hormone (MSH)-binding to human receptors (Ki=1.8 uM to MC1R, Ki=19.8 uM to MC3R, Ki=7.1 uM to MC4R, Ki=10.0 uM to MC5R). This toxin is structurally unrelated to the natural agonists. The sequence is that of NU-theraphotoxin-Preg1a from Poecilotheria regalis (Indian ornamental tree spider).